Consider the following 389-residue polypeptide: MCERAARLCRAGAHRLLREPPPQGRALGGLLRWVGARMGEPRAPLVPDIPSADPGPGPAASRGGTAVILDIFRRADKNDDGKLSLEEFQLFFADGVLNEKELEGLFHTIDSDNTNHVDTKELCDYFVEHMGDYEDVLASLETLNHSVLKAMGYTKKVYEGGSNVDQFVTRFLLKETANQIQSLLSSVESAVEAIEEQTSQIRQDHCKPSHAVNESRYGGPTPPYIPNHKLVAPEPMKSLPVATGEPKEDGLEGQISRLAELIGRLESKTLSFDLQQRLSDEEGTNMHLQLVRQEMAVCPEQLSEFLDSLRQYLRSTAEERNCFHVAAVRMADGLTFVIYEFWETEEEWKRHLQSPVCKAFRHVKVDTLSQPEALSQISVPAAWCTSGRD.

Arg-10 is subject to Omega-N-methylarginine. The residue at position 42 (Arg-42) is an Asymmetric dimethylarginine. EF-hand domains lie at 63-98 (GGTA…GVLN) and 99-132 (EKEL…HMGD). Ca(2+) is bound by residues Asp-76, Asn-78, Asp-80, Lys-82, Glu-87, Asp-110, Asp-112, Thr-114, His-116, and Glu-121. Residues 173-198 (LKETANQIQSLLSSVESAVEAIEEQT) adopt a coiled-coil conformation. Residues 289-377 (QLVRQEMAVC…LSQPEALSQI (89 aa)) enclose the ABM domain.

In terms of assembly, interacts (calcium-dependent) with ADORA2A and GRM5. Expressed in the iris, in the ciliary margin of the retina and in the inner portion of the neural retina. Expressed in the spinal dorsal horn with especially strong expression in lamina IIi; found in excitory synaptic boutons (at protein level).

The protein localises to the cytoplasm. Its subcellular location is the cell projection. It localises to the dendrite. It is found in the axon. The protein resides in the cell membrane. Functionally, may act as a signaling scaffold protein that senses intracellular calcium. Can modulate ligand-induced internalization of ADORA2A and coupling efficiency of mGluR5/GRM5; for both receptors may regulate signaling activity such as promoting MAPK1/3 (ERK1/2) activation. In Mus musculus (Mouse), this protein is N-terminal EF-hand calcium-binding protein 2 (Necab2).